Here is a 403-residue protein sequence, read N- to C-terminus: Argininosuccinate synthase (403 aa).

Residues 10-18 and Ala-38 contribute to the ATP site; that span reads AYSGGVDTS. Residue Tyr-89 participates in L-citrulline binding. Residue Gly-119 participates in ATP binding. Residues Thr-121, Asn-125, and Asp-126 each contribute to the L-aspartate site. Residue Asn-125 participates in L-citrulline binding. 5 residues coordinate L-citrulline: Arg-129, Ser-177, Ser-186, Glu-262, and Tyr-274.

Belongs to the argininosuccinate synthase family. Type 1 subfamily. In terms of assembly, homotetramer.

The protein localises to the cytoplasm. It catalyses the reaction L-citrulline + L-aspartate + ATP = 2-(N(omega)-L-arginino)succinate + AMP + diphosphate + H(+). The protein operates within amino-acid biosynthesis; L-arginine biosynthesis; L-arginine from L-ornithine and carbamoyl phosphate: step 2/3. The polypeptide is Argininosuccinate synthase (Synechococcus sp. (strain CC9902)).